Consider the following 326-residue polypeptide: GTP 3',8-cyclase (326 aa).

Positions 4-227 (KHERNINYMR…LTPQKNILGN (224 aa)) constitute a Radical SAM core domain. Residue Arg-13 participates in GTP binding. Residues Cys-20 and Cys-24 each coordinate [4Fe-4S] cluster. Position 26 (Tyr-26) interacts with S-adenosyl-L-methionine. Cys-27 contributes to the [4Fe-4S] cluster binding site. Arg-63 serves as a coordination point for GTP. Gly-67 contributes to the S-adenosyl-L-methionine binding site. Residue Thr-94 coordinates GTP. An S-adenosyl-L-methionine-binding site is contributed by Ser-118. Lys-155 lines the GTP pocket. Residue Met-189 participates in S-adenosyl-L-methionine binding. 2 residues coordinate [4Fe-4S] cluster: Cys-253 and Cys-256. Residue 258–260 (RIR) coordinates GTP. Cys-270 is a binding site for [4Fe-4S] cluster.

It belongs to the radical SAM superfamily. MoaA family. In terms of assembly, monomer and homodimer. [4Fe-4S] cluster serves as cofactor.

The enzyme catalyses GTP + AH2 + S-adenosyl-L-methionine = (8S)-3',8-cyclo-7,8-dihydroguanosine 5'-triphosphate + 5'-deoxyadenosine + L-methionine + A + H(+). Its pathway is cofactor biosynthesis; molybdopterin biosynthesis. In terms of biological role, catalyzes the cyclization of GTP to (8S)-3',8-cyclo-7,8-dihydroguanosine 5'-triphosphate. The polypeptide is GTP 3',8-cyclase (Syntrophomonas wolfei subsp. wolfei (strain DSM 2245B / Goettingen)).